A 643-amino-acid chain; its full sequence is RNA-binding protein MEX3D (643 aa).

2 disordered regions span residues 1–48 (MPGS…DAAA) and 61–92 (GLGG…APPD). A compositionally biased stretch (low complexity) spans 18 to 34 (TAGDPGHPHPALAGAED). A compositionally biased stretch (acidic residues) spans 83-92 (CGEDEPAPPD). KH domains follow at residues 160–221 (MTEC…KREI) and 253–314 (QTTI…REEI). Disordered regions lie at residues 357–427 (PHPG…GTAT), 471–505 (GAPA…GGLS), and 519–583 (VGAV…APGP). Over residues 405-418 (GGSGNGGFTFGGDG) the composition is skewed to gly residues. A Phosphothreonine modification is found at Thr-491. Ser-495 bears the Phosphoserine mark. Composition is skewed to low complexity over residues 495–505 (SPTLPEPGGLS), 531–556 (LPPF…SSTL), and 567–583 (PSTT…APGP). Residues 592–632 (CVVCSEGEAMAALVPCGHNLFCMDCAVRICGKSEPECPACR) form an RING-type zinc finger.

It localises to the cytoplasm. The protein localises to the nucleus. In terms of biological role, RNA binding protein, may be involved in post-transcriptional regulatory mechanisms. The chain is RNA-binding protein MEX3D (Mex3d) from Mus musculus (Mouse).